We begin with the raw amino-acid sequence, 298 residues long: Cyclin-dependent kinase 1 (298 aa).

N-acetylserine is present on Ser-2. The Protein kinase domain maps to 8-295; sequence YKRLEKVGEG…ARRAAIHPYF (288 aa). Residues 14-22 and Lys-40 contribute to the ATP site; that span reads VGEGTYGVV. Tyr-19 carries the phosphotyrosine modification. Asp-136 serves as the catalytic Proton acceptor. Residue Thr-169 is modified to Phosphothreonine.

Belongs to the protein kinase superfamily. CMGC Ser/Thr protein kinase family. CDC2/CDKX subfamily. As to quaternary structure, forms a stable but non-covalent complex with the CKS1 protein and with a cyclin.

It catalyses the reaction L-seryl-[protein] + ATP = O-phospho-L-seryl-[protein] + ADP + H(+). It carries out the reaction L-threonyl-[protein] + ATP = O-phospho-L-threonyl-[protein] + ADP + H(+). With respect to regulation, phosphorylation at Thr-18 or Tyr-19 inactivates the enzyme, while phosphorylation at Thr-169 activates it. Its function is as follows. Cyclin-dependent kinase that acts as a master regulator of the mitotic and meiotic cell cycles. Required to drive the G1-S transition. More than 200 substrates have been identified. Substrate specificity is in part regulated by the bound cyclin protein. Phosphorylates YTA7 during S-phase to promote transcription of histones. May phosphorylate CNN1, to contribute to the enrichment of CNN1 on anaphase kinetochores. This chain is Cyclin-dependent kinase 1, found in Saccharomyces cerevisiae (strain ATCC 204508 / S288c) (Baker's yeast).